A 346-amino-acid polypeptide reads, in one-letter code: Threonylcarbamoyl-AMP synthase (346 aa).

Positions 18-205 (DPQIAQAAAL…IPVLLRPGGI (188 aa)) constitute a YrdC-like domain. L-threonine is bound at residue Thr-40. Residues Arg-63 and Asn-67 each contribute to the ATP site. His-72 contributes to the L-threonine binding site. Thr-123 provides a ligand contact to ATP. Arg-127 and Ala-147 together coordinate L-threonine. ATP is bound by residues Ser-149 and Ser-157. Residue Ser-187 participates in L-threonine binding. Residues Arg-201 and Tyr-240 each contribute to the ATP site.

The protein belongs to the SUA5 family.

The protein resides in the cytoplasm. The catalysed reaction is L-threonine + hydrogencarbonate + ATP = L-threonylcarbamoyladenylate + diphosphate + H2O. In terms of biological role, required for the formation of a threonylcarbamoyl group on adenosine at position 37 (t(6)A37) in tRNAs that read codons beginning with adenine. Catalyzes the conversion of L-threonine, HCO(3)(-)/CO(2) and ATP to give threonylcarbamoyl-AMP (TC-AMP) as the acyladenylate intermediate, with the release of diphosphate. Is also able to catalyze the reverse reaction in vitro, i.e. the formation of ATP from TC-AMP and PPi. This chain is Threonylcarbamoyl-AMP synthase (ywlC), found in Bacillus subtilis (strain 168).